Reading from the N-terminus, the 187-residue chain is Tetratricopeptide repeat protein 36 (187 aa).

3 TPR repeats span residues 47 to 80, 82 to 114, and 119 to 152; these read VKDLELQGVSSAESGDLPAALQHFNQAISVLPQR, SAYNNRAQTKRLLGDTKGAVEDLEHAISLSNGK, and CQALVQRGLLLRLSGHDEEARLDFERAAALGSEF.

It belongs to the TTC36 family.

The chain is Tetratricopeptide repeat protein 36 (ttc36) from Danio rerio (Zebrafish).